We begin with the raw amino-acid sequence, 450 residues long: Trigger factor (450 aa).

The PPIase FKBP-type domain maps to 163–249; it reads EDFVLIDYQG…LKEIQEQILP (87 aa). The span at 431–443 shows a compositional bias: acidic residues; sequence PEVETEVSESAAD. A disordered region spans residues 431–450; that stretch reads PEVETEVSESAADVEDKTDQ.

This sequence belongs to the FKBP-type PPIase family. Tig subfamily.

It is found in the cytoplasm. The catalysed reaction is [protein]-peptidylproline (omega=180) = [protein]-peptidylproline (omega=0). Its function is as follows. Involved in protein export. Acts as a chaperone by maintaining the newly synthesized protein in an open conformation. Functions as a peptidyl-prolyl cis-trans isomerase. In Desulforapulum autotrophicum (strain ATCC 43914 / DSM 3382 / VKM B-1955 / HRM2) (Desulfobacterium autotrophicum), this protein is Trigger factor.